The sequence spans 167 residues: Keratin-associated protein 1-3 (167 aa).

Belongs to the KRTAP type 1 family. In terms of assembly, interacts with hair keratins. As to expression, expressed in the middle/upper portions of the hair cortex, in the region termed the keratogenous zone.

In the hair cortex, hair keratin intermediate filaments are embedded in an interfilamentous matrix, consisting of hair keratin-associated proteins (KRTAP), which are essential for the formation of a rigid and resistant hair shaft through their extensive disulfide bond cross-linking with abundant cysteine residues of hair keratins. The matrix proteins include the high-sulfur and high-glycine-tyrosine keratins. The protein is Keratin-associated protein 1-3 (KRTAP1-3) of Homo sapiens (Human).